The following is a 420-amino-acid chain: Transcription factor bHLH89 (420 aa).

A disordered region spans residues 196–216 (EENNNLDDGLNRKGRGSKKRK). The span at 207–216 (RKGRGSKKRK) shows a compositional bias: basic residues. Positions 212–261 (SKKRKIFPTERERRVHFKDRFGDLKNLIPNPTKNDRASIVGEAIDYIKEL) constitute a bHLH domain.

Homodimer. As to expression, flowers.

Its subcellular location is the nucleus. The polypeptide is Transcription factor bHLH89 (BHLH89) (Arabidopsis thaliana (Mouse-ear cress)).